A 91-amino-acid polypeptide reads, in one-letter code: CLAVATA3/ESR (CLE)-related protein 27 (91 aa).

The first 35 residues, 1–35 (MTHAREWRSSLTTTLLMVILLSYMLHLFCVYSRVG), serve as a signal peptide directing secretion. 2 positions are modified to hydroxyproline: proline 83 and proline 86. O-linked (Ara...) hydroxyproline glycosylation is present at proline 86.

It belongs to the CLV3/ESR signal peptide family. In terms of processing, the O-glycosylation (arabinosylation) of the hydroxyproline Pro-86 enhances binding affinity of the CLE27p peptide for its receptor. As to expression, mostly expressed in apex, and, to a lower extent, in roots, leaves, flowers and siliques.

Its subcellular location is the secreted. The protein localises to the extracellular space. Functionally, extracellular signal peptide that regulates cell fate. Represses root apical meristem maintenance. The protein is CLAVATA3/ESR (CLE)-related protein 27 of Arabidopsis thaliana (Mouse-ear cress).